The primary structure comprises 158 residues: MAEASSLVGKLETEVEIKASAKKFHHMFTERPHHVSKATPDKIHGCELHEGDWGKVGSIVIWKYVHDGKLTVGKNKIEAVDPEKNLITFKVLEGDLMNEYKSFAFTLQVTPKQGESGSIAHWHLEYEKISEEVAHPETLLQFCVEISKEIDEHLLAEE.

N-acetylalanine is present on Ala-2.

The protein belongs to the MLP family.

In Arabidopsis thaliana (Mouse-ear cress), this protein is MLP-like protein 43 (MLP43).